A 274-amino-acid chain; its full sequence is Glutamate racemase (274 aa).

Residues Asp-9–Ser-10 and Tyr-41–Gly-42 contribute to the substrate site. The active-site Proton donor/acceptor is Cys-73. Asn-74–Thr-75 is a substrate binding site. The Proton donor/acceptor role is filled by Cys-183. Thr-184 to His-185 is a binding site for substrate.

The protein belongs to the aspartate/glutamate racemases family.

It carries out the reaction L-glutamate = D-glutamate. Its pathway is cell wall biogenesis; peptidoglycan biosynthesis. Provides the (R)-glutamate required for cell wall biosynthesis. The protein is Glutamate racemase of Shewanella baltica (strain OS223).